The primary structure comprises 185 residues: NADH-ubiquinone oxidoreductase chain 6 (185 aa).

5 helical membrane passes run 3 to 23, 28 to 48, 54 to 74, 87 to 107, and 134 to 154; these read SLFMIFSLGIVGASLMVISTP, SVFWLVIAFVNAAVMFISLGL, IFIIVYVGAIAILFLFVIMLI, HFLPIGLSVIFLFYSLLTNSP, and ELVLIASLVLLVAMIGAILLA.

Belongs to the complex I subunit 6 family.

The protein resides in the mitochondrion membrane. It carries out the reaction a ubiquinone + NADH + 5 H(+)(in) = a ubiquinol + NAD(+) + 4 H(+)(out). Its function is as follows. Core subunit of the mitochondrial membrane respiratory chain NADH dehydrogenase (Complex I) that is believed to belong to the minimal assembly required for catalysis. Complex I functions in the transfer of electrons from NADH to the respiratory chain. The immediate electron acceptor for the enzyme is believed to be ubiquinone. The polypeptide is NADH-ubiquinone oxidoreductase chain 6 (ND6) (Sarcophyton glaucum (Toadstool umbrella leather coral)).